The primary structure comprises 776 residues: Ribosomal RNA large subunit methyltransferase K/L (776 aa).

The THUMP domain occupies aspartate 68–leucine 183.

Belongs to the methyltransferase superfamily. RlmKL family.

Its subcellular location is the cytoplasm. It catalyses the reaction guanosine(2445) in 23S rRNA + S-adenosyl-L-methionine = N(2)-methylguanosine(2445) in 23S rRNA + S-adenosyl-L-homocysteine + H(+). The catalysed reaction is guanosine(2069) in 23S rRNA + S-adenosyl-L-methionine = N(2)-methylguanosine(2069) in 23S rRNA + S-adenosyl-L-homocysteine + H(+). Its function is as follows. Specifically methylates the guanine in position 2445 (m2G2445) and the guanine in position 2069 (m7G2069) of 23S rRNA. The polypeptide is Ribosomal RNA large subunit methyltransferase K/L (Psychrobacter cryohalolentis (strain ATCC BAA-1226 / DSM 17306 / VKM B-2378 / K5)).